Consider the following 317-residue polypeptide: Tyrosine--tRNA ligase (317 aa).

Tyrosine 33 is an L-tyrosine binding site. The 'HIGH' region motif lies at 38 to 46; it reads PSGKIHMGH. Positions 155, 159, 162, and 177 each coordinate L-tyrosine. The short motif at 211 to 215 is the 'KMSKS' region element; sequence KMASS. Serine 214 is an ATP binding site.

This sequence belongs to the class-I aminoacyl-tRNA synthetase family. TyrS type 3 subfamily. Homodimer.

Its subcellular location is the cytoplasm. It carries out the reaction tRNA(Tyr) + L-tyrosine + ATP = L-tyrosyl-tRNA(Tyr) + AMP + diphosphate + H(+). In terms of biological role, catalyzes the attachment of tyrosine to tRNA(Tyr) in a two-step reaction: tyrosine is first activated by ATP to form Tyr-AMP and then transferred to the acceptor end of tRNA(Tyr). The protein is Tyrosine--tRNA ligase of Methanosarcina barkeri (strain Fusaro / DSM 804).